We begin with the raw amino-acid sequence, 247 residues long: 2,3-bisphosphoglycerate-dependent phosphoglycerate mutase (247 aa).

Substrate contacts are provided by residues Arg-8–Asn-15, Thr-21–Gly-22, Arg-60, Glu-87–Tyr-90, Lys-98, Arg-114–Arg-115, and Gly-183–Asn-184. The Tele-phosphohistidine intermediate role is filled by His-9. Residue Glu-87 is the Proton donor/acceptor of the active site.

Belongs to the phosphoglycerate mutase family. BPG-dependent PGAM subfamily. As to quaternary structure, homodimer.

The catalysed reaction is (2R)-2-phosphoglycerate = (2R)-3-phosphoglycerate. It functions in the pathway carbohydrate degradation; glycolysis; pyruvate from D-glyceraldehyde 3-phosphate: step 3/5. Its function is as follows. Catalyzes the interconversion of 2-phosphoglycerate and 3-phosphoglycerate. This is 2,3-bisphosphoglycerate-dependent phosphoglycerate mutase from Geobacter metallireducens (strain ATCC 53774 / DSM 7210 / GS-15).